The following is a 334-amino-acid chain: Malate dehydrogenase, mitochondrial (334 aa).

Residues 1 to 17 (MLSRVAKRAFSSTVANP) constitute a mitochondrion transit peptide. Residues 24–30 (GAGGGIG) and D50 contribute to the NAD(+) site. Positions 99 and 105 each coordinate substrate. NAD(+) contacts are provided by residues N112 and 135–137 (ISN). Substrate is bound by residues N137 and R171. Position 177 is a phosphoserine (S177). The active-site Proton acceptor is H195. Phosphothreonine is present on T199. Position 245 (M245) interacts with NAD(+).

The protein belongs to the LDH/MDH superfamily. MDH type 1 family. As to quaternary structure, homodimer.

Its subcellular location is the mitochondrion matrix. It catalyses the reaction (S)-malate + NAD(+) = oxaloacetate + NADH + H(+). In Saccharomyces cerevisiae (strain ATCC 204508 / S288c) (Baker's yeast), this protein is Malate dehydrogenase, mitochondrial (MDH1).